An 88-amino-acid chain; its full sequence is Small ribosomal subunit protein uS15 (88 aa).

The protein belongs to the universal ribosomal protein uS15 family. As to quaternary structure, part of the 30S ribosomal subunit. Forms a bridge to the 50S subunit in the 70S ribosome, contacting the 23S rRNA.

One of the primary rRNA binding proteins, it binds directly to 16S rRNA where it helps nucleate assembly of the platform of the 30S subunit by binding and bridging several RNA helices of the 16S rRNA. Functionally, forms an intersubunit bridge (bridge B4) with the 23S rRNA of the 50S subunit in the ribosome. The sequence is that of Small ribosomal subunit protein uS15 from Albidiferax ferrireducens (strain ATCC BAA-621 / DSM 15236 / T118) (Rhodoferax ferrireducens).